A 465-amino-acid chain; its full sequence is Ribulose bisphosphate carboxylase large chain (465 aa).

At Lys-4 the chain carries N6,N6,N6-trimethyllysine. The substrate site is built by Asn-113 and Thr-163. Residue Lys-165 is the Proton acceptor of the active site. Lys-167 is a substrate binding site. Lys-191, Asp-193, and Glu-194 together coordinate Mg(2+). At Lys-191 the chain carries N6-carboxylysine. His-284 acts as the Proton acceptor in catalysis. Substrate-binding residues include Arg-285, His-317, and Ser-369.

The protein belongs to the RuBisCO large chain family. Type I subfamily. Heterohexadecamer of 8 large chains and 8 small chains; disulfide-linked. The disulfide link is formed within the large subunit homodimers. Mg(2+) serves as cofactor. The disulfide bond which can form in the large chain dimeric partners within the hexadecamer appears to be associated with oxidative stress and protein turnover.

Its subcellular location is the plastid. The protein resides in the chloroplast. It catalyses the reaction 2 (2R)-3-phosphoglycerate + 2 H(+) = D-ribulose 1,5-bisphosphate + CO2 + H2O. It carries out the reaction D-ribulose 1,5-bisphosphate + O2 = 2-phosphoglycolate + (2R)-3-phosphoglycerate + 2 H(+). Its function is as follows. RuBisCO catalyzes two reactions: the carboxylation of D-ribulose 1,5-bisphosphate, the primary event in carbon dioxide fixation, as well as the oxidative fragmentation of the pentose substrate in the photorespiration process. Both reactions occur simultaneously and in competition at the same active site. This Senega cruciata (Cross-leaved milkwort) protein is Ribulose bisphosphate carboxylase large chain.